Here is a 139-residue protein sequence, read N- to C-terminus: Putative pre-16S rRNA nuclease (139 aa).

The protein belongs to the YqgF nuclease family.

Its subcellular location is the cytoplasm. Functionally, could be a nuclease involved in processing of the 5'-end of pre-16S rRNA. This is Putative pre-16S rRNA nuclease from Streptococcus agalactiae serotype Ia (strain ATCC 27591 / A909 / CDC SS700).